The primary structure comprises 147 residues: Allograft inflammatory factor 1 (147 aa).

Ser-2 bears the N-acetylserine mark. N6-acetyllysine is present on Lys-11. The residue at position 39 (Ser-39) is a Phosphoserine. One can recognise an EF-hand 1 domain in the interval 45–80 (SKLEAFKKKYMEFDLNEDGGIDIMSLKRMMEKLGVP). Positions 58, 60, and 62 each coordinate Ca(2+). One can recognise an EF-hand 2; degenerate domain in the interval 81–115 (KTHLELKKLIMEVSSGPGETFSYSDFLKMMLGKRS). A disordered region spans residues 128 to 147 (AREQEKPTGLPAKKAISELP).

Phosphorylated on serine residues.

It localises to the cytoplasm. The protein resides in the cytoskeleton. Its subcellular location is the cell projection. It is found in the ruffle membrane. The protein localises to the phagocytic cup. In terms of biological role, may play a role in macrophage activation and function. The chain is Allograft inflammatory factor 1 (AIF1) from Bos taurus (Bovine).